The following is a 150-amino-acid chain: Interferon antagonist OPG027 (150 aa).

The protein belongs to the orthopoxvirus OPG027 family.

In terms of biological role, inhibits antiviral activity induced by type I interferons. Does not block signal transduction of IFN, but is important to counteract the host antiviral state induced by a pre-treatment with IFN. The protein is Interferon antagonist OPG027 (OPG027) of Cynomys gunnisoni (Gunnison's prairie dog).